Here is a 263-residue protein sequence, read N- to C-terminus: Putative ankyrin repeat domain-containing protein 20A12 pseudogene (263 aa).

2 coiled-coil regions span residues 65–121 (KKDL…MLES) and 171–263 (NQVF…IQLH).

The protein is Putative ankyrin repeat domain-containing protein 20A12 pseudogene of Homo sapiens (Human).